The sequence spans 242 residues: Beta-carotene ketolase (242 aa).

The catalysed reaction is all-trans-beta-carotene + 2 AH2 + 2 O2 = echinenone + 2 A + 3 H2O. The enzyme catalyses echinenone + 2 AH2 + 2 O2 = canthaxanthin + 2 A + 3 H2O. The protein operates within carotenoid biosynthesis; astaxanthin biosynthesis. Converts beta-carotene to canthaxanthin via echinenone. The sequence is that of Beta-carotene ketolase from Paracoccus sp. (strain PC1) (Alcaligenes sp. (strain PC1)).